Here is a 1710-residue protein sequence, read N- to C-terminus: Latrophilin Cirl (1710 aa).

Topologically, residues 1 to 767 (MLPTILSISY…LFTMFDGNMR (767 aa)) are extracellular. Positions 25-114 (ACEGKKLTIE…KYLEAHYQCI (90 aa)) constitute an SUEL-type lectin domain. A glycan (N-linked (GlcNAc...) asparagine) is linked at asparagine 142. Residues 183–304 (QHTAVTHSTP…SGSVVPGNGS (122 aa)) form a disordered region. 2 stretches are compositionally biased toward polar residues: residues 185 to 198 (TAVTHSTPSSSTTA) and 256 to 265 (NATSPSNTRI). An N-linked (GlcNAc...) asparagine glycan is attached at asparagine 256. Low complexity-rich tracts occupy residues 275–285 (DDGTLLTTKSS) and 295–304 (SGSVVPGNGS). 2 N-linked (GlcNAc...) asparagine glycosylation sites follow: asparagine 302 and asparagine 341. The segment at 376 to 400 (YDEYDDDPSSTTPATSSADCLHNSS) is disordered. The span at 384 to 394 (SSTTPATSSAD) shows a compositional bias: low complexity. N-linked (GlcNAc...) asparagine glycans are attached at residues asparagine 398, asparagine 655, asparagine 703, and asparagine 730. The GAIN-B domain maps to 561-754 (RSVVQKVKNI…AILMDVVDEH (194 aa)). Intrachain disulfides connect cysteine 709-cysteine 736 and cysteine 724-cysteine 738. Residues 709–754 (CVFWNYIDHAWSANGCSLESTNRTHSVCSCNHLTNFAILMDVVDEH) are GPS. Residues 768-788 (IFIYISIGICVVFIVIALLTL) form a helical membrane-spanning segment. Residues 789–801 (KLFNGVFVKSART) lie on the Cytoplasmic side of the membrane. A helical transmembrane segment spans residues 802–822 (SIYTSIYLCLLAIELLFLLGI). The Extracellular portion of the chain corresponds to 823-828 (EQTETS). Residues 829–849 (IFCGFITIFLHCAILSGTAWF) form a helical membrane-spanning segment. The Cytoplasmic segment spans residues 850-875 (CYEAFHSYSTLTSDELLLEVDQTPKV). The helical transmembrane segment at 876–896 (NCYYLLSYGLSLSVVAISLVI) threads the bilayer. The Extracellular portion of the chain corresponds to 897–920 (DPSTYTQNDYCVLMEANALFYATF). A helical transmembrane segment spans residues 921 to 941 (VMPVLVFFVAAIGYTFLSWII). Topologically, residues 942–968 (MCRKSRTGLKTKEHTRLASVRFDIRCS) are cytoplasmic. A helical transmembrane segment spans residues 969–989 (FVFLLLLSAVWCSAYFYLRGA). Residues 990 to 999 (KMDDDTADVY) are Extracellular-facing. The chain crosses the membrane as a helical span at residues 1000–1020 (GYCFICFNTLLGLYIFVFHCI). Topologically, residues 1021-1710 (QNEKIRREYR…VRCYLEPLAK (690 aa)) are cytoplasmic. Phosphoserine occurs at positions 1156, 1253, 1260, 1329, and 1330. Residues 1234–1259 (KPNSGQHGKKKRGAGGVPASPSGSLH) are disordered. 2 disordered regions span residues 1452 to 1540 (GGGS…SDER) and 1568 to 1690 (DYGA…QQRH). Residues 1458 to 1483 (GGSVSSRSQQQQLKKQQQQQSLAQQR) are compositionally biased toward low complexity. Acidic residues-rich tracts occupy residues 1491-1505 (DDDDDEDEEEDEEAT) and 1515-1528 (CDEDEEEDESDLED). The segment covering 1638–1650 (QTPAQKRQQLQKL) has biased composition (polar residues). Over residues 1651–1672 (SPQSTTSSSSHTSHSNPNPHPH) the composition is skewed to low complexity. The segment covering 1673–1689 (QLTHPHPHQHPPHHQQR) has biased composition (basic residues).

This sequence belongs to the G-protein coupled receptor 2 family. LN-TM7 subfamily. As to quaternary structure, forms a heterodimer, consisting of a large extracellular region non-covalently linked to a seven-transmembrane moiety. Post-translationally, proteolytically cleaved into 2 subunits, an extracellular subunit and a seven-transmembrane subunit.

It is found in the cell membrane. This is Latrophilin Cirl from Drosophila erecta (Fruit fly).